We begin with the raw amino-acid sequence, 550 residues long: MTKVPATKKLQSSPNSGAVRPFYASENLRQVPDKPMKSIKYMDKEIINLKKDLIRSRFLIQSVKIGRGYFAILREETAKKKKQQQLQKLKEEERNKFQPAEKISEIHYGDTLLSTYDDEKLKTLGARVTRRPFTPIHSCIISPSLTEAHVEPLFRQLCALHWLLEALTIDHTHHTMKPVITCWNPKDPGGSKSTIKKINKDKSMGQKWEHFITAPKTKKFKIPTMRVTNRKPSRRGSTLSLSRASGGSSPQSSMISVNPGSDEPPSVNTQVTSSKDIEDNESSSTKPDEEPLYMNLQKLLEMVREDARRTVTIENGMQRKAPSILSVLKQNKSNSAYKEMQTTLKSSERSSSTSAESHIQPVQKKSKNRTNCDINIHYKSGVCNTMRAKFYSVAQEAGFCLQDKMEILMKRQEERGIQKFRAFVLVSNFQKDIAKMRHHISVVKGDAEEIADHWYFDLLSKLPEDLKNFRPAKKILVKLQKFGENLDLRIRPHVLLKVLQDLRIWELCSPDIAVAIEFVREHIIHMPQEDYISWLQSRINIPIGPYSALR.

A disordered region spans residues 1 to 21 (MTKVPATKKLQSSPNSGAVRP). Positions 71–98 (AILREETAKKKKQQQLQKLKEEERNKFQ) form a coiled coil. Disordered regions lie at residues 219–293 (KFKI…EPLY) and 336–367 (AYKEMQTTLKSSERSSSTSAESHIQPVQKKSK). Residues 235–256 (RGSTLSLSRASGGSSPQSSMIS) are compositionally biased toward low complexity. The segment covering 336-345 (AYKEMQTTLK) has biased composition (polar residues).

The protein is Coiled-coil domain-containing protein 60 (CCDC60) of Homo sapiens (Human).